Reading from the N-terminus, the 329-residue chain is Protein-arginine N-acetylglucosaminyltransferase NleB1 (329 aa).

Residue Arg13 is glycosylated (N-beta-linked (GlcNAc) arginine; by autocatalysis). Gln48–Phe50 lines the UDP-N-acetyl-alpha-D-glucosamine pocket. Arg53 is a glycosylation site (N-beta-linked (GlcNAc) arginine; by autocatalysis). UDP-N-acetyl-alpha-D-glucosamine is bound at residue Tyr72. A glycan (N-beta-linked (GlcNAc) arginine; by autocatalysis) is linked at Arg159. Position 219 to 222 (Tyr219 to Ala222) interacts with UDP-N-acetyl-alpha-D-glucosamine. The DXD motif signature appears at Asp221–Asp223. Asp223 contributes to the Mn(2+) binding site. The active-site Proton acceptor is the Glu253. A glycan (N-beta-linked (GlcNAc) arginine; by autocatalysis) is linked at Arg293. Residues Asn320 and Ser322 each contribute to the Mn(2+) site. UDP-N-acetyl-alpha-D-glucosamine is bound by residues Ser322 and Ser327–Trp329.

This sequence belongs to the glycosyltransferase NleB family. Mn(2+) is required as a cofactor. In terms of processing, auto-glycosylated: arginine GlcNAcylation is required for activity toward death domain-containing host target proteins.

It localises to the secreted. The protein resides in the host cytoplasm. It carries out the reaction L-arginyl-[protein] + UDP-N-acetyl-alpha-D-glucosamine = N(omega)-(N-acetyl-beta-D-glucosaminyl)-L-arginyl-[protein] + UDP + H(+). In terms of biological role, protein-arginine N-acetylglucosaminyltransferase effector that disrupts TNF signaling in infected cells, including NF-kappa-B signaling, apoptosis and necroptosis. Acts by catalyzing the transfer of a single N-acetylglucosamine (GlcNAc) to a conserved arginine residue in the death domain of host proteins FADD, TRADD, FAS, TNFRSF1A/TNFR1, TNFRSF25/DR3 and RIPK1: arginine GlcNAcylation prevents homotypic/heterotypic death domain interactions and assembly of the oligomeric TNF-alpha receptor complex, thereby disrupting TNF signaling. Has preference for host FADD as substrate compared to other death domain-containing proteins. Also acts on host proteins without a death domain: catalyzes arginine GlcNAcylation of HIF1A, thereby regulating host glucose metabolism. Also displays intra-bacterial activity by mediating GlcNAcylation of glutathione synthetase GshB. Catalyzes auto-GlcNAcylation, which is required for activity toward death domain-containing host target proteins. Shows a higher enzymatic activity than NleB2. The polypeptide is Protein-arginine N-acetylglucosaminyltransferase NleB1 (Escherichia coli O127:H6 (strain E2348/69 / EPEC)).